We begin with the raw amino-acid sequence, 311 residues long: Malate dehydrogenase (311 aa).

NAD(+) contacts are provided by residues 7–13 (GAAGGIG) and aspartate 34. Residues arginine 81 and arginine 87 each coordinate substrate. Residues asparagine 94 and 117–119 (ITN) contribute to the NAD(+) site. Substrate is bound by residues asparagine 119 and arginine 153. Residue histidine 177 is the Proton acceptor of the active site. Methionine 227 is an NAD(+) binding site.

The protein belongs to the LDH/MDH superfamily. MDH type 1 family. Homodimer.

The enzyme catalyses (S)-malate + NAD(+) = oxaloacetate + NADH + H(+). Functionally, catalyzes the reversible oxidation of malate to oxaloacetate. The polypeptide is Malate dehydrogenase (Aliivibrio salmonicida (strain LFI1238) (Vibrio salmonicida (strain LFI1238))).